We begin with the raw amino-acid sequence, 232 residues long: tRNA1(Val) (adenine(37)-N6)-methyltransferase (232 aa).

It belongs to the methyltransferase superfamily. tRNA (adenine-N(6)-)-methyltransferase family.

Its subcellular location is the cytoplasm. It catalyses the reaction adenosine(37) in tRNA1(Val) + S-adenosyl-L-methionine = N(6)-methyladenosine(37) in tRNA1(Val) + S-adenosyl-L-homocysteine + H(+). In terms of biological role, specifically methylates the adenine in position 37 of tRNA(1)(Val) (anticodon cmo5UAC). This is tRNA1(Val) (adenine(37)-N6)-methyltransferase from Haemophilus influenzae (strain ATCC 51907 / DSM 11121 / KW20 / Rd).